The following is a 1070-amino-acid chain: Carbamoyl phosphate synthase large chain (1070 aa).

The tract at residues 1–401 is carboxyphosphate synthetic domain; sequence MPKRDDIKTI…ALLKAVRSLE (401 aa). Positions 129, 169, 175, 176, 208, 210, 215, 241, 242, 243, 284, and 298 each coordinate ATP. The region spanning 133–327 is the ATP-grasp 1 domain; the sequence is RDLMNELGEP…IAKLAAKIAV (195 aa). Mg(2+) is bound by residues Gln-284, Glu-298, and Asn-300. Residues Gln-284, Glu-298, and Asn-300 each contribute to the Mn(2+) site. Positions 402–546 are oligomerization domain; it reads VGADHLLLEE…YSTYEEENES (145 aa). The tract at residues 547 to 929 is carbamoyl phosphate synthetic domain; the sequence is TRSAKESVIV…ALYKGFVASG (383 aa). One can recognise an ATP-grasp 2 domain in the interval 671–861; it reads EKALEILQIP…MANVATRVIL (191 aa). Positions 707, 746, 748, 752, 777, 778, 779, 780, 820, and 832 each coordinate ATP. The Mg(2+) site is built by Gln-820, Glu-832, and Asn-834. Mn(2+) contacts are provided by Gln-820, Glu-832, and Asn-834. Residues 930-1070 enclose the MGS-like domain; that stretch reads TTMHDYGTVL…SEVKQPKVRV (141 aa). Residues 930 to 1070 form an allosteric domain region; that stretch reads TTMHDYGTVL…SEVKQPKVRV (141 aa).

The protein belongs to the CarB family. As to quaternary structure, composed of two chains; the small (or glutamine) chain promotes the hydrolysis of glutamine to ammonia, which is used by the large (or ammonia) chain to synthesize carbamoyl phosphate. Tetramer of heterodimers (alpha,beta)4. Mg(2+) serves as cofactor. Requires Mn(2+) as cofactor.

It catalyses the reaction hydrogencarbonate + L-glutamine + 2 ATP + H2O = carbamoyl phosphate + L-glutamate + 2 ADP + phosphate + 2 H(+). The enzyme catalyses hydrogencarbonate + NH4(+) + 2 ATP = carbamoyl phosphate + 2 ADP + phosphate + 2 H(+). Its pathway is amino-acid biosynthesis; L-arginine biosynthesis; carbamoyl phosphate from bicarbonate: step 1/1. It participates in pyrimidine metabolism; UMP biosynthesis via de novo pathway; (S)-dihydroorotate from bicarbonate: step 1/3. Functionally, large subunit of the glutamine-dependent carbamoyl phosphate synthetase (CPSase). CPSase catalyzes the formation of carbamoyl phosphate from the ammonia moiety of glutamine, carbonate, and phosphate donated by ATP, constituting the first step of 2 biosynthetic pathways, one leading to arginine and/or urea and the other to pyrimidine nucleotides. The large subunit (synthetase) binds the substrates ammonia (free or transferred from glutamine from the small subunit), hydrogencarbonate and ATP and carries out an ATP-coupled ligase reaction, activating hydrogencarbonate by forming carboxy phosphate which reacts with ammonia to form carbamoyl phosphate. The chain is Carbamoyl phosphate synthase large chain from Listeria welshimeri serovar 6b (strain ATCC 35897 / DSM 20650 / CCUG 15529 / CIP 8149 / NCTC 11857 / SLCC 5334 / V8).